We begin with the raw amino-acid sequence, 254 residues long: tRNA (guanine-N(7)-)-methyltransferase (254 aa).

Residues 1-11 show a composition bias toward basic and acidic residues; sequence MSISDNSREEL. Residues 1–25 are disordered; the sequence is MSISDNSREELGELPAGRPLQSEFN. S-adenosyl-L-methionine is bound by residues Glu-83, Glu-108, Asp-135, and Asp-158. Asp-158 is an active-site residue. Residue Lys-162 coordinates substrate. The interval 164–169 is interaction with RNA; sequence RHNKRR. Substrate is bound by residues Asp-194 and 232 to 235; that span reads TKFE.

The protein belongs to the class I-like SAM-binding methyltransferase superfamily. TrmB family.

It carries out the reaction guanosine(46) in tRNA + S-adenosyl-L-methionine = N(7)-methylguanosine(46) in tRNA + S-adenosyl-L-homocysteine. Its pathway is tRNA modification; N(7)-methylguanine-tRNA biosynthesis. In terms of biological role, catalyzes the formation of N(7)-methylguanine at position 46 (m7G46) in tRNA. The chain is tRNA (guanine-N(7)-)-methyltransferase from Corynebacterium efficiens (strain DSM 44549 / YS-314 / AJ 12310 / JCM 11189 / NBRC 100395).